Reading from the N-terminus, the 111-residue chain is Mitochondrial import inner membrane translocase subunit Tim10B (111 aa).

The Twin CX3C motif motif lies at 24-48 (CFNACARDYTTSTLTKDEGSCVSQC). Disulfide bonds link Cys-24–Cys-48 and Cys-28–Cys-44. The disordered stretch occupies residues 73–111 (KQGEQSPTEAIKSAKPEPAVPAPEATPVETTPVIEENKQ). The span at 94 to 105 (APEATPVETTPV) shows a compositional bias: low complexity.

Belongs to the small Tim family. In terms of assembly, component of the TIM22 complex, whose core is composed of tim-22, associated with peripheral protein tin-9.2/tim-10b and the 70 kDa heterohexamer. In most cases, the 70 kDa complex is composed of TIMM9 and TIMM10.

The protein resides in the mitochondrion inner membrane. Its function is as follows. Component of the TIM22 complex, a complex that mediates the import and insertion of multi-pass transmembrane proteins into the mitochondrial inner membrane. The TIM22 complex forms a twin-pore translocase that uses the membrane potential as the external driving force. In the TIM22 complex, it may act as a docking point for the soluble 70 kDa complex that guides the target proteins in transit through the aqueous mitochondrial intermembrane space. In Caenorhabditis elegans, this protein is Mitochondrial import inner membrane translocase subunit Tim10B (tin-9.2).